The following is a 330-amino-acid chain: Aspartate--ammonia ligase (330 aa).

The protein belongs to the class-II aminoacyl-tRNA synthetase family. AsnA subfamily.

The protein localises to the cytoplasm. The enzyme catalyses L-aspartate + NH4(+) + ATP = L-asparagine + AMP + diphosphate + H(+). It participates in amino-acid biosynthesis; L-asparagine biosynthesis; L-asparagine from L-aspartate (ammonia route): step 1/1. This Streptococcus thermophilus (strain CNRZ 1066) protein is Aspartate--ammonia ligase.